The chain runs to 188 residues: dCTP deaminase (188 aa).

107 to 112 (KSTYAR) lines the dCTP pocket. Glu133 serves as the catalytic Proton donor/acceptor. DCTP contacts are provided by Gln152, Tyr166, and Gln176.

It belongs to the dCTP deaminase family. In terms of assembly, homotrimer.

The enzyme catalyses dCTP + H2O + H(+) = dUTP + NH4(+). The protein operates within pyrimidine metabolism; dUMP biosynthesis; dUMP from dCTP (dUTP route): step 1/2. In terms of biological role, catalyzes the deamination of dCTP to dUTP. The polypeptide is dCTP deaminase (Sulfurovum sp. (strain NBC37-1)).